Here is a 224-residue protein sequence, read N- to C-terminus: ATP-dependent dethiobiotin synthetase BioD (224 aa).

Thr18 provides a ligand contact to Mg(2+). Lys39 is a catalytic residue. Substrate is bound at residue Ser43. Asp56 and Glu117 together coordinate Mg(2+). Residues Asp56, 117–120 (EGVG), and 177–178 (NE) each bind ATP.

Belongs to the dethiobiotin synthetase family. As to quaternary structure, homodimer. The cofactor is Mg(2+).

It localises to the cytoplasm. It catalyses the reaction (7R,8S)-7,8-diammoniononanoate + CO2 + ATP = (4R,5S)-dethiobiotin + ADP + phosphate + 3 H(+). Its pathway is cofactor biosynthesis; biotin biosynthesis; biotin from 7,8-diaminononanoate: step 1/2. Its function is as follows. Catalyzes a mechanistically unusual reaction, the ATP-dependent insertion of CO2 between the N7 and N8 nitrogen atoms of 7,8-diaminopelargonic acid (DAPA, also called 7,8-diammoniononanoate) to form a ureido ring. The protein is ATP-dependent dethiobiotin synthetase BioD of Xanthomonas euvesicatoria pv. vesicatoria (strain 85-10) (Xanthomonas campestris pv. vesicatoria).